We begin with the raw amino-acid sequence, 154 residues long: Protein X (154 aa).

Residues 28-48 (RPLPGPLGTLPPASPPAVPTD) are disordered. Residues 68–117 (PCALRFTSARRMETTVNAHGNLPKVLHKRTLGLSAMSTTDLEAYFKDCVF) are mitochondrial targeting sequence.

The protein belongs to the orthohepadnavirus protein X family. As to quaternary structure, may form homodimer. May interact with host CEBPA, CFLAR, CREB1, DDB1, E4F1, HBXIP, HSPD1/HSP60, NFKBIA, POLR2E and SMAD4. Interacts with host SMC5-SMC6 complex and induces its degradation. Interacts with host TRPC4AP; leading to prevent ubiquitination of TRPC4AP. Interacts with host PLSCR1; this interaction promotes ubiquitination and degradation of HBx and impairs HBx-mediated cell proliferation. Post-translationally, a fraction may be phosphorylated in insect cells and HepG2 cells, a human hepatoblastoma cell line. Phosphorylated in vitro by host protein kinase C or mitogen-activated protein kinase. N-acetylated in insect cells.

It localises to the host cytoplasm. The protein localises to the host nucleus. The protein resides in the host mitochondrion. Functionally, multifunctional protein that plays a role in silencing host antiviral defenses and promoting viral transcription. Does not seem to be essential for HBV infection. May be directly involved in development of cirrhosis and liver cancer (hepatocellular carcinoma). Most of cytosolic activities involve modulation of cytosolic calcium. The effect on apoptosis is controversial depending on the cell types in which the studies have been conducted. May induce apoptosis by localizing in mitochondria and causing loss of mitochondrial membrane potential. May also modulate apoptosis by binding host CFLAR, a key regulator of the death-inducing signaling complex (DISC). Promotes viral transcription by using the host E3 ubiquitin ligase DDB1 to target the SMC5-SMC6 complex to proteasomal degradation. This host complex would otherwise bind to viral episomal DNA, and prevents its transcription. Moderately stimulates transcription of many different viral and cellular transcription elements. Promoters and enhancers stimulated by HBx contain DNA binding sites for NF-kappa-B, AP-1, AP-2, c-EBP, ATF/CREB, or the calcium-activated factor NF-AT. The sequence is that of Protein X from Hepatitis B virus genotype B2 subtype adw (isolate China/patient4/1996) (HBV-B).